The following is a 302-amino-acid chain: N-acetylaspartate synthetase (302 aa).

Positions 46–60 (PGPAAAPPAPPPAPV) are enriched in pro residues. The disordered stretch occupies residues 46-72 (PGPAAAPPAPPPAPVAQPHGGAGGAGP). A helical transmembrane segment spans residues 121-141 (YALLAALCFAVSRSLLLTCLV). One can recognise an N-acetyltransferase domain in the interval 143-283 (AALLGLRYYY…VLPGMTLSLA (141 aa)).

Belongs to the NAT8 family. In terms of tissue distribution, expressed in brain.

Its subcellular location is the cytoplasm. It localises to the microsome membrane. The protein resides in the mitochondrion membrane. It is found in the endoplasmic reticulum membrane. It carries out the reaction L-aspartate + acetyl-CoA = N-acetyl-L-aspartate + CoA + H(+). Aminooxyacetic acid (AOAA) blocks its activity in both cytoplasm and mitochondria. Catalyzes the synthesis of N-acetylaspartate acid (NAA) from L-aspartate and acetyl-CoA. Promotes dopamine uptake by regulating TNF-alpha expression. Attenuates methamphetamine-induced inhibition of dopamine uptake. The sequence is that of N-acetylaspartate synthetase from Homo sapiens (Human).